The primary structure comprises 236 residues: tRNA1(Val) (adenine(37)-N6)-methyltransferase (236 aa).

This sequence belongs to the methyltransferase superfamily. tRNA (adenine-N(6)-)-methyltransferase family.

It localises to the cytoplasm. It carries out the reaction adenosine(37) in tRNA1(Val) + S-adenosyl-L-methionine = N(6)-methyladenosine(37) in tRNA1(Val) + S-adenosyl-L-homocysteine + H(+). In terms of biological role, specifically methylates the adenine in position 37 of tRNA(1)(Val) (anticodon cmo5UAC). The sequence is that of tRNA1(Val) (adenine(37)-N6)-methyltransferase from Aeromonas salmonicida (strain A449).